The chain runs to 520 residues: GMP synthase [glutamine-hydrolyzing] (520 aa).

A Glutamine amidotransferase type-1 domain is found at 8–202; it reads RLLIIDFGSQ…FVRLAGFSGD (195 aa). The Nucleophile role is filled by Cys-86. Active-site residues include His-177 and Glu-179. In terms of domain architecture, GMPS ATP-PPase spans 203-395; it reads WTMGAYREQM…LGLPDSFIGR (193 aa). ATP is bound at residue 230–236; it reads SGGVDSS.

Homodimer.

The enzyme catalyses XMP + L-glutamine + ATP + H2O = GMP + L-glutamate + AMP + diphosphate + 2 H(+). The protein operates within purine metabolism; GMP biosynthesis; GMP from XMP (L-Gln route): step 1/1. Its function is as follows. Catalyzes the synthesis of GMP from XMP. This chain is GMP synthase [glutamine-hydrolyzing], found in Ruegeria sp. (strain TM1040) (Silicibacter sp.).